Reading from the N-terminus, the 364-residue chain is Protein PROCA1 (364 aa).

The segment covering 172-182 (LNEEEEEEEEE) has biased composition (acidic residues). Residues 172–364 (LNEEEEEEEE…SPPGSNPNLS (193 aa)) form a disordered region. The segment covering 203–223 (SMATGTPDSTAPITIWRSESP) has biased composition (polar residues). Over residues 232–241 (VIKKVKKKKE) the composition is skewed to basic residues. Over residues 242 to 253 (KEKDKEEMDEKA) the composition is skewed to basic and acidic residues. A compositionally biased stretch (basic residues) spans 254-270 (KLKKKAKKGQLTKKKSP). Phosphoserine occurs at positions 276, 308, 318, 319, 355, and 364.

The protein belongs to the PROCA1 family. High expressed in testis.

This chain is Protein PROCA1 (PROCA1), found in Homo sapiens (Human).